The primary structure comprises 754 residues: Elongation factor G-2, mitochondrial (754 aa).

The tr-type G domain occupies 63 to 340; sequence DKLRNIGISA…GVVSFLPSPN (278 aa). GTP-binding positions include 72–79, 139–143, and 193–196; these read AHIDSGKT, DTPGH, and NKLD.

It belongs to the TRAFAC class translation factor GTPase superfamily. Classic translation factor GTPase family. EF-G/EF-2 subfamily. Expressed in cotyledons and adult leaves at the same levels.

The protein resides in the mitochondrion. Its pathway is protein biosynthesis; polypeptide chain elongation. Its function is as follows. Mitochondrial GTPase that catalyzes the GTP-dependent ribosomal translocation step during translation elongation. During this step, the ribosome changes from the pre-translocational (PRE) to the post-translocational (POST) state as the newly formed A-site-bound peptidyl-tRNA and P-site-bound deacylated tRNA move to the P and E sites, respectively. Catalyzes the coordinated movement of the two tRNA molecules, the mRNA and conformational changes in the ribosome. The protein is Elongation factor G-2, mitochondrial (MEFG2) of Arabidopsis thaliana (Mouse-ear cress).